We begin with the raw amino-acid sequence, 575 residues long: Thiol:disulfide interchange protein DsbD (575 aa).

The first 24 residues, 1 to 24 (MIKRTLMLFLLLCSPLLTPAAANA), serve as a signal peptide directing secretion. 2 disulfide bridges follow: C126-C132 and C192-C314. 8 helical membrane-spanning segments follow: residues 180–200 (AILI…YPLI), 216–236 (IFWL…LLGL), 253–273 (YVLI…FGLY), 297–317 (LFGV…CTTA), 336–356 (GLTL…VTLF), 367–387 (WMQY…VFLL), 394–414 (AWGI…GFVL), and 425–445 (VIQL…QDWF). The Thioredoxin domain maps to 444–575 (WFWGTTVTQQ…FNEHLQHLPK (132 aa)). C490 and C493 are joined by a disulfide.

The protein belongs to the thioredoxin family. DsbD subfamily.

It is found in the cell inner membrane. It carries out the reaction [protein]-dithiol + NAD(+) = [protein]-disulfide + NADH + H(+). It catalyses the reaction [protein]-dithiol + NADP(+) = [protein]-disulfide + NADPH + H(+). Required to facilitate the formation of correct disulfide bonds in some periplasmic proteins and for the assembly of the periplasmic c-type cytochromes. Acts by transferring electrons from cytoplasmic thioredoxin to the periplasm. This transfer involves a cascade of disulfide bond formation and reduction steps. This Photorhabdus laumondii subsp. laumondii (strain DSM 15139 / CIP 105565 / TT01) (Photorhabdus luminescens subsp. laumondii) protein is Thiol:disulfide interchange protein DsbD.